The following is an 801-amino-acid chain: Quinoprotein glucose dehydrogenase A (801 aa).

An N-terminal signal peptide occupies residues 1–33 (MNQPTSRSGLTTFTVIIIGLLALFLLIGGIWLA). Helical transmembrane passes span 39-55 (IYYI…AWQL), 59-79 (ASTA…WSVW), 94-108 (ILGI…PAVT), and 119-138 (VALS…SIFN). Asp471 (proton acceptor) is an active-site residue.

Belongs to the bacterial PQQ dehydrogenase family. Monomer. Pyrroloquinoline quinone serves as cofactor.

It localises to the cell inner membrane. The catalysed reaction is D-glucose + A = D-glucono-1,5-lactone + AH2. Its function is as follows. Catalyzes an exceptionally high rate of oxidation of a wide range of aldose sugars, including D-glucose, galactose, arabinose and xylose, and also the disaccharides lactose, cellobiose and maltose. This is Quinoprotein glucose dehydrogenase A (gdhA) from Acinetobacter calcoaceticus.